Reading from the N-terminus, the 178-residue chain is Crossover junction endodeoxyribonuclease RuvC (178 aa).

Catalysis depends on residues aspartate 14, glutamate 73, and aspartate 145. Mg(2+) is bound by residues aspartate 14, glutamate 73, and aspartate 145.

Belongs to the RuvC family. As to quaternary structure, homodimer which binds Holliday junction (HJ) DNA. The HJ becomes 2-fold symmetrical on binding to RuvC with unstacked arms; it has a different conformation from HJ DNA in complex with RuvA. In the full resolvosome a probable DNA-RuvA(4)-RuvB(12)-RuvC(2) complex forms which resolves the HJ. Requires Mg(2+) as cofactor.

Its subcellular location is the cytoplasm. It catalyses the reaction Endonucleolytic cleavage at a junction such as a reciprocal single-stranded crossover between two homologous DNA duplexes (Holliday junction).. Functionally, the RuvA-RuvB-RuvC complex processes Holliday junction (HJ) DNA during genetic recombination and DNA repair. Endonuclease that resolves HJ intermediates. Cleaves cruciform DNA by making single-stranded nicks across the HJ at symmetrical positions within the homologous arms, yielding a 5'-phosphate and a 3'-hydroxyl group; requires a central core of homology in the junction. The consensus cleavage sequence is 5'-(A/T)TT(C/G)-3'. Cleavage occurs on the 3'-side of the TT dinucleotide at the point of strand exchange. HJ branch migration catalyzed by RuvA-RuvB allows RuvC to scan DNA until it finds its consensus sequence, where it cleaves and resolves the cruciform DNA. The protein is Crossover junction endodeoxyribonuclease RuvC of Nitrosomonas eutropha (strain DSM 101675 / C91 / Nm57).